The following is a 224-amino-acid chain: Protein DEHYDRATION-INDUCED 19 homolog 4 (224 aa).

Polar residues predominate over residues 1–12 (MDSNWINCPSVF). The tract at residues 1-23 (MDSNWINCPSVFSSSSSSSRRCQ) is disordered. The segment covering 13-23 (SSSSSSSRRCQ) has biased composition (low complexity). At threonine 117 the chain carries Phosphothreonine.

Belongs to the Di19 family. Post-translationally, phosphorylated in vitro by CPK3 or CPK11. In terms of tissue distribution, expressed in seedlings, roots, leaves, stems, flowers and siliques.

It localises to the cytoplasm. The protein localises to the perinuclear region. This is Protein DEHYDRATION-INDUCED 19 homolog 4 (DI19-4) from Arabidopsis thaliana (Mouse-ear cress).